A 414-amino-acid polypeptide reads, in one-letter code: Esterase FrsA (414 aa).

The protein belongs to the FrsA family.

It catalyses the reaction a carboxylic ester + H2O = an alcohol + a carboxylate + H(+). In terms of biological role, catalyzes the hydrolysis of esters. The polypeptide is Esterase FrsA (Escherichia coli O7:K1 (strain IAI39 / ExPEC)).